We begin with the raw amino-acid sequence, 524 residues long: Peptide chain release factor 3 (524 aa).

The tr-type G domain maps to 9–275; it reads QRRRTFAIIS…AVVELSPPPL (267 aa). GTP-binding positions include 18–25, 86–90, and 140–143; these read SHPDAGKT, DTPGH, and NKLD.

This sequence belongs to the TRAFAC class translation factor GTPase superfamily. Classic translation factor GTPase family. PrfC subfamily.

The protein localises to the cytoplasm. Functionally, increases the formation of ribosomal termination complexes and stimulates activities of RF-1 and RF-2. It binds guanine nucleotides and has strong preference for UGA stop codons. It may interact directly with the ribosome. The stimulation of RF-1 and RF-2 is significantly reduced by GTP and GDP, but not by GMP. This chain is Peptide chain release factor 3, found in Methylobacillus flagellatus (strain ATCC 51484 / DSM 6875 / VKM B-1610 / KT).